We begin with the raw amino-acid sequence, 123 residues long: MAAASPTRAGQAAETQALEYLQGQGLQLLARNWRCKGGELDLVMLDADTVVFVEVRYRLHAGFGGALDSIDGRKQKRLVLAASLFLQKEAHWGNHPCRFDVVALQGSHHAGRPLQWLKNAFEC.

The protein belongs to the UPF0102 family.

This Pseudomonas putida (strain ATCC 700007 / DSM 6899 / JCM 31910 / BCRC 17059 / LMG 24140 / F1) protein is UPF0102 protein Pput_4400.